The sequence spans 94 residues: Translation initiation factor 1A 2 (94 aa).

The 75-residue stretch at 6-80 (GRRNLRMPSD…EKANIEWRYS (75 aa)) folds into the S1-like domain.

This sequence belongs to the eIF-1A family.

Seems to be required for maximal rate of protein biosynthesis. Enhances ribosome dissociation into subunits and stabilizes the binding of the initiator Met-tRNA(I) to 40 S ribosomal subunits. The chain is Translation initiation factor 1A 2 from Haloquadratum walsbyi (strain DSM 16790 / HBSQ001).